The primary structure comprises 237 residues: Cytidylate kinase (237 aa).

Residue 15 to 23 coordinates ATP; that stretch reads GPSGSGKGT.

This sequence belongs to the cytidylate kinase family. Type 1 subfamily.

It localises to the cytoplasm. It carries out the reaction CMP + ATP = CDP + ADP. The catalysed reaction is dCMP + ATP = dCDP + ADP. The chain is Cytidylate kinase from Coxiella burnetii (strain RSA 493 / Nine Mile phase I).